The primary structure comprises 352 residues: Quinolinate synthase (352 aa).

2 residues coordinate iminosuccinate: His-48 and Ser-69. Cys-114 is a [4Fe-4S] cluster binding site. Iminosuccinate contacts are provided by residues 140 to 142 (YAN) and Ser-157. Cys-201 is a binding site for [4Fe-4S] cluster. Iminosuccinate-binding positions include 227–229 (HPE) and Thr-244. Cys-298 lines the [4Fe-4S] cluster pocket.

This sequence belongs to the quinolinate synthase family. Type 1 subfamily. The cofactor is [4Fe-4S] cluster.

It localises to the cytoplasm. The catalysed reaction is iminosuccinate + dihydroxyacetone phosphate = quinolinate + phosphate + 2 H2O + H(+). The protein operates within cofactor biosynthesis; NAD(+) biosynthesis; quinolinate from iminoaspartate: step 1/1. Catalyzes the condensation of iminoaspartate with dihydroxyacetone phosphate to form quinolinate. In Pseudomonas fluorescens (strain Pf0-1), this protein is Quinolinate synthase.